A 274-amino-acid polypeptide reads, in one-letter code: Putative septum site-determining protein MinD (274 aa).

Lys-22–Thr-29 serves as a coordination point for ATP.

This sequence belongs to the ParA family. MinD subfamily.

Its subcellular location is the plastid. The protein resides in the chloroplast. ATPase required for the correct placement of the division site. This chain is Putative septum site-determining protein MinD (minD-A), found in Nephroselmis olivacea (Green alga).